A 365-amino-acid chain; its full sequence is Gibberellin 20 oxidase 1-B (365 aa).

Residues 199-299 (GNDSIMRLNY…RKSLAFFLCP (101 aa)) enclose the Fe2OG dioxygenase domain. 3 residues coordinate Fe cation: H224, D226, and H280. R290 is an active-site residue.

This sequence belongs to the iron/ascorbate-dependent oxidoreductase family. GA20OX subfamily. The cofactor is Fe cation. It depends on L-ascorbate as a cofactor. As to expression, not detected in nodes and the ear of the elongating stem.

It carries out the reaction gibberellin A12 + 2 2-oxoglutarate + 3 O2 + H(+) = gibberellin A9 + 2 succinate + 3 CO2 + 2 H2O. The enzyme catalyses gibberellin A53 + 2 2-oxoglutarate + 3 O2 + H(+) = gibberellin A20 + 2 succinate + 3 CO2 + 2 H2O. In terms of biological role, key oxidase enzyme in the biosynthesis of gibberellin that catalyzes the conversion of GA12 and GA53 to GA9 and GA20 respectively, via a three-step oxidation at C-20 of the GA skeleton. The chain is Gibberellin 20 oxidase 1-B (GA20ox1B) from Triticum aestivum (Wheat).